A 587-amino-acid polypeptide reads, in one-letter code: Hatching enzyme (587 aa).

Positions 1–18 (MANSGLILLVMFMIHVTT) are cleaved as a signal peptide. A propeptide spans 19 to 166 (VHNVPLPSTA…PRCGVPDVLP (148 aa)) (activation peptide). Asparagine 64, asparagine 126, and asparagine 141 each carry an N-linked (GlcNAc...) asparagine glycan. Positions 157–164 (PRCGVPDV) match the Cysteine switch motif. Cysteine 159 and histidine 283 together coordinate Zn(2+). The active site involves glutamate 284. 2 residues coordinate Zn(2+): histidine 287 and histidine 293. The disordered stretch occupies residues 325-382 (LYGSNSGSGTTTTTRRPTTTRATTTRRTTTTRATTTRATTTTTTSPSRPSPPRRACSG). Low complexity predominate over residues 334–371 (TTTTTRRPTTTRATTTRRTTTTRATTTRATTTTTTSPS). A disulfide bridge links cysteine 380 with cysteine 582. Hemopexin repeat units follow at residues 381 to 422 (SGSF…RFGF), 425 to 468 (PQNI…WVGL), 469 to 513 (PCNI…FNDV), and 518 to 570 (HDGV…IPQC). An N-linked (GlcNAc...) asparagine glycan is attached at asparagine 584.

Belongs to the peptidase M10A family. Zn(2+) serves as cofactor.

The catalysed reaction is Hydrolysis of proteins of the fertilization envelope and dimethylcasein.. Functionally, allows the sea urchin to digest the protective envelope derived from the egg extracellular matrix; thus allowing the sea urchin to swim freely. The chain is Hatching enzyme from Paracentrotus lividus (Common sea urchin).